A 327-amino-acid chain; its full sequence is COP9 signalosome complex subunit 6 (327 aa).

The MPN domain occupies 41–174; sequence VALHPLVILN…VSVFESVIDI (134 aa). The interaction with Vpr stretch occupies residues 211 to 327; it reads SGENSTVAEH…IGRRMRGLFF (117 aa).

It belongs to the peptidase M67A family. CSN6 subfamily. Component of the CSN complex, composed of COPS1/GPS1, COPS2, COPS3, COPS4, COPS5, COPS6, COPS7 (COPS7A or COPS7B), COPS8 and COPS9 isoform 1. In the complex, it probably interacts directly with COPS2, COPS4, COPS5, COPS7 (COPS7A or COPS7B) and COPS9 isoform 1. Interacts with the translation initiation factor EIF3S6. Interacts weakly with RBX1. Directly interacts with COP1 and 14-3-3 protein sigma/SFN. Interacts with ERCC6. As to quaternary structure, (Microbial infection) Interacts with the HIV-1 protein Vpr. Widely expressed.

It localises to the nucleus. Its subcellular location is the cytoplasm. The protein localises to the perinuclear region. Functionally, component of the COP9 signalosome complex (CSN), a complex involved in various cellular and developmental processes. The CSN complex is an essential regulator of the ubiquitin (Ubl) conjugation pathway by mediating the deneddylation of the cullin subunits of SCF-type E3 ligase complexes, leading to decrease the Ubl ligase activity of SCF-type complexes such as SCF, CSA or DDB2. The complex is also involved in phosphorylation of p53/TP53, c-jun/JUN, IkappaBalpha/NFKBIA, ITPK1 and IRF8, possibly via its association with CK2 and PKD kinases. CSN-dependent phosphorylation of TP53 and JUN promotes and protects degradation by the Ubl system, respectively. Has some glucocorticoid receptor-responsive activity. Stabilizes COP1 through reducing COP1 auto-ubiquitination and decelerating COP1 turnover rate, hence regulates the ubiquitination of COP1 targets. The sequence is that of COP9 signalosome complex subunit 6 (COPS6) from Homo sapiens (Human).